The following is a 576-amino-acid chain: Arginine--tRNA ligase (576 aa).

Residues 122 to 132 (PNVAKQMHVGH) carry the 'HIGH' region motif.

The protein belongs to the class-I aminoacyl-tRNA synthetase family. As to quaternary structure, monomer.

The protein localises to the cytoplasm. The catalysed reaction is tRNA(Arg) + L-arginine + ATP = L-arginyl-tRNA(Arg) + AMP + diphosphate. This Yersinia pestis bv. Antiqua (strain Antiqua) protein is Arginine--tRNA ligase.